Reading from the N-terminus, the 160-residue chain is MPSFDIVSEINMEEVRNATDNASRELSTRFDFRGIDASFEYKDKTVVMKAEAEFQLQQMESMFRTAMSKRNVDTSSMDVKPYDAHGKTYRQTIAFKEGIEQPTAKKIVKLIKDAKVKVQTAIQGEELRVTGKKRDDLQQAIALVKEANLGQPFQFKNFRD.

This sequence belongs to the YajQ family.

In terms of biological role, nucleotide-binding protein. This is Nucleotide-binding protein MADE_1020535 from Alteromonas mediterranea (strain DSM 17117 / CIP 110805 / LMG 28347 / Deep ecotype).